Reading from the N-terminus, the 487-residue chain is Zinc finger protein 345 (487 aa).

15 C2H2-type zinc fingers span residues 62–84 (LECKECGKDFSFVSVLIRHQRIH), 90–112 (YECKECGKAFGSGANLAYHQRIH), 118–140 (YECNECGKAFGSGSNLTHHQRIH), 146–168 (YECKECGKAFSFGSGLIRHQIIH), 174–196 (YECKVCGKSFSFESALTRHHRIH), 202–224 (YECKDCGKAFGSGSNLTQHRRVH), 230–252 (YECKGCGMAFSSGSALTRHQRIH), 258–280 (YICNECGKAFSFGSALTRHQRIH), 286–308 (YVCKECGKAFNSGSDLTQHQRIH), 314–336 (YECKECEKAFRSGSKLIQHQRMH), 342–364 (YECKECGKAFSSGSDLTQHQRIH), 370–392 (YECKECGKAFASGSKLIQHQLIH), 398–420 (YECRECRKSFSSGSALNRHQRIH), 426–448 (YECKECEKTFGTGSTLTQHQRMH), and 454–476 (YECKACGKALGRGSEIQQHKKNH).

It belongs to the krueppel C2H2-type zinc-finger protein family.

The protein localises to the nucleus. In terms of biological role, may be involved in transcriptional regulation. This is Zinc finger protein 345 (ZNF345) from Bos taurus (Bovine).